A 2639-amino-acid polypeptide reads, in one-letter code: BAH and coiled-coil domain-containing protein 1 (2639 aa).

12 disordered regions span residues 23–49 (SAAA…GKYF), 84–107 (SAAS…GSHP), 188–249 (APAH…GKER), 669–702 (FLSS…RQPP), 716–746 (VSRS…PRST), 939–1047 (QRAA…QSTA), 1104–1331 (SDVH…HSSG), 1457–1513 (QREL…KKVK), 1582–1666 (KVKS…LGTE), 1722–1776 (EVKI…RDAL), 1868–1893 (FDDN…PLSA), and 2057–2119 (KKVS…DHFL). Composition is skewed to low complexity over residues 24 to 41 (AAAA…QPPA) and 84 to 98 (SAAS…SSPP). Composition is skewed to basic and acidic residues over residues 211–247 (GPKD…DGGK) and 679–698 (ERPD…DGEV). An N6-acetyllysine modification is found at Lys-222. Basic and acidic residues predominate over residues 946 to 964 (RKPEDQHLDLEEPAQEKAP). The span at 972–988 (ALTPTAPGAPSPAAGPT) shows a compositional bias: low complexity. Positions 989 to 1013 (KLPPCCHPPDPKPPASSPTPPPRPS) are enriched in pro residues. Polar residues predominate over residues 1106 to 1122 (VHSSNLEDPETMQTTAP). Positions 1182 to 1198 (LEGLQELQCAALLEAGG) are enriched in low complexity. Over residues 1212–1221 (AREERSREEG) the composition is skewed to basic and acidic residues. A compositionally biased stretch (acidic residues) spans 1244–1275 (LEDEGEQPAPEEDELEEDELGQQSMEDSEEDC). Positions 1307–1324 (DSPPDPQPPAASGPPSTV) are enriched in pro residues. Residues 1439 to 1473 (EVGMRVRLAELQRRYKEKQRELARLQRKHDHERDE) adopt a coiled-coil conformation. Basic and acidic residues predominate over residues 1457–1475 (QRELARLQRKHDHERDESS). Positions 1478-1492 (PARRGPGRPRKRKHS) are enriched in basic residues. Over residues 1751–1761 (GKKKAKGKAKG) the composition is skewed to basic residues. Over residues 1868–1888 (FDDNSSFSEEEEDEEEEEEDS) the composition is skewed to acidic residues. A Phosphoserine modification is found at Ser-2274. Disordered stretches follow at residues 2317 to 2336 (SDCH…LAAG), 2348 to 2383 (SSSS…SDDE), and 2432 to 2472 (GAGS…ENRP). The span at 2348–2371 (SSSSSGSSTSSSSGSVSTSSLCSS) shows a compositional bias: low complexity. Residues 2372 to 2383 (DNEDSSYSSDDE) are compositionally biased toward acidic residues. Low complexity predominate over residues 2432–2442 (GAGSGPSSSSK). In terms of domain architecture, BAH spans 2513 to 2633 (ETLRVGDCAV…PTTGRLVTAD (121 aa)).

This chain is BAH and coiled-coil domain-containing protein 1, found in Homo sapiens (Human).